The primary structure comprises 883 residues: Glutamate receptor 2 (883 aa).

An N-terminal signal peptide occupies residues 1–24 (MQKIMHISVLLSPVLWGLIFGVSS). The Extracellular portion of the chain corresponds to 25–543 (NSIQIGGLFP…GVFSFLDPLA (519 aa)). A disulfide bridge connects residues cysteine 78 and cysteine 330. 4 N-linked (GlcNAc...) asparagine glycosylation sites follow: asparagine 256, asparagine 370, asparagine 406, and asparagine 413. L-glutamate is bound by residues proline 499, threonine 501, and arginine 506. Residues 544–564 (YEIWMCIVFAYIGVSVVLFLV) traverse the membrane as a helical segment. Over 565 to 591 (SRFSPYEWHTEEFEDGRETQSSESTNE) the chain is Cytoplasmic. The segment at residues 592 to 607 (FGIFNSLWFSLGAFMQ) is an intramembrane region (helical; Pore-forming). An intramembrane segment occupies 608 to 610 (QGC). The S-palmitoyl cysteine moiety is linked to residue cysteine 610. Over 611–616 (DISPRS) the chain is Cytoplasmic. The helical transmembrane segment at 617–637 (LSGRIVGGVWWFFTLIIISSY) threads the bilayer. The Extracellular portion of the chain corresponds to 638-812 (TANLAAFLTV…EKTSALSLSN (175 aa)). Residues serine 675 and threonine 676 each coordinate L-glutamate. Residue serine 683 is modified to Phosphoserine; by PKC. Phosphoserine; by PKG is present on serine 717. Glutamate 726 provides a ligand contact to L-glutamate. The cysteines at positions 739 and 794 are disulfide-linked. A helical transmembrane segment spans residues 813-833 (VAGVFYILVGGLGLAMLVALI). Over 834-883 (EFCYKSRAEAKRMKVAKNAQNINPSSSQNSQNFATYKEGYNVYGIESVKI) the chain is Cytoplasmic. The S-palmitoyl cysteine moiety is linked to residue cysteine 836. Serine 860 and serine 863 each carry phosphoserine. The required for interaction with IQSEC1 stretch occupies residues 867–877 (ATYKEGYNVYG). Position 876 is a phosphotyrosine (tyrosine 876). Serine 880 is modified (phosphoserine).

The protein belongs to the glutamate-gated ion channel (TC 1.A.10.1) family. GRIA2 subfamily. In terms of assembly, homotetramer or heterotetramer of pore-forming glutamate receptor subunits. Tetramers may be formed by the dimerization of dimers. May interact with MPP4. Forms a ternary complex with GRIP1 and CSPG4. Interacts with ATAD1 in an ATP-dependent manner. ATAD1-catalyzed ATP hydrolysis disrupts binding to ATAD1 and to GRIP1 and leads to AMPAR complex disassembly. Interacts with GRIP1 and GRIP2. Interacts with NSF via its C-terminus. Isoform 1, but not isoform 3, interacts with PICK1. Interacts with CACNG2. Interacts with GRIA1 and SYNDIG1. Part of a complex containing GRIA2, NSF and NAPA and/or NAPB. Interacts with SNX27 (via PDZ domain); the interaction is required for recycling to the plasma membrane when endocytosed and prevent degradation in lysosomes. Interacts with LRFN1. Found in a complex with GRIA1, GRIA3, GRIA4, CNIH2, CNIH3, CACNG2, CACNG3, CACNG4, CACNG5, CACNG7 and CACNG8. Interacts with CACNG5. Interacts with OLFM2. Interacts with AP4B1, AP4E1 and AP4M1; probably indirect it mediates the somatodendritic localization of GRIA2 in neurons. Forms a complex with GRIP1, NSG1 and STX12; controls the intracellular fate of AMPAR and the endosomal sorting of the GRIA2 subunit toward recycling and membrane targeting. Interacts with IQSEC1; the interaction is required for ARF6 activation. Interacts (heterotetramer form) with CNIH2 and CNIH3; this interaction promotes expression at the plasma membrane and extensively modulates their gating properties by slowing deactivation and desensitization kinetics. Palmitoylated. Depalmitoylated upon L-glutamate stimulation. Cys-610 palmitoylation leads to Golgi retention and decreased cell surface expression. In contrast, Cys-836 palmitoylation does not affect cell surface expression but regulates stimulation-dependent endocytosis. Post-translationally, ubiquitinated by RNF167, leading to its degradation. In terms of processing, phosphorylation at Tyr-876 is required for interaction with IQSEC1 and ARF6 activation, which in turn triggers AMPAR internalization for persistent synaptic depression. N-glycosylated.

Its subcellular location is the cell membrane. The protein resides in the postsynaptic cell membrane. The protein localises to the postsynaptic density membrane. It catalyses the reaction Ca(2+)(in) = Ca(2+)(out). It carries out the reaction Na(+)(in) = Na(+)(out). Ionotropic glutamate receptor that functions as a ligand-gated cation channel, gated by L-glutamate and glutamatergic agonists such as alpha-amino-3-hydroxy-5-methyl-4-isoxazolepropionic acid (AMPA), quisqualic acid, and kainic acid. L-glutamate acts as an excitatory neurotransmitter at many synapses in the central nervous system and plays an important role in fast excitatory synaptic transmission. Binding of the excitatory neurotransmitter L-glutamate induces a conformation change, leading to the opening of the cation channel, and thereby converts the chemical signal to an electrical impulse upon entry of monovalent and divalent cations such as sodium and calcium. The receptor then desensitizes rapidly and enters in a transient inactive state, characterized by the presence of bound agonist. In the presence of CACNG4 or CACNG7 or CACNG8, shows resensitization which is characterized by a delayed accumulation of current flux upon continued application of L-glutamate. Through complex formation with NSG1, GRIP1 and STX12 controls the intracellular fate of AMPAR and the endosomal sorting of the GRIA2 subunit toward recycling and membrane targeting. The protein is Glutamate receptor 2 of Homo sapiens (Human).